The following is a 215-amino-acid chain: Adenylyl-sulfate kinase (215 aa).

Position 46-53 (46-53) interacts with ATP; that stretch reads GLSGAGKS. Catalysis depends on S120, which acts as the Phosphoserine intermediate.

Belongs to the APS kinase family.

It carries out the reaction adenosine 5'-phosphosulfate + ATP = 3'-phosphoadenylyl sulfate + ADP + H(+). The protein operates within sulfur metabolism; hydrogen sulfide biosynthesis; sulfite from sulfate: step 2/3. Its function is as follows. Catalyzes the synthesis of activated sulfate. This chain is Adenylyl-sulfate kinase (cysC), found in Vibrio cholerae serotype O1 (strain ATCC 39315 / El Tor Inaba N16961).